Consider the following 205-residue polypeptide: ATP-dependent Clp protease proteolytic subunit (205 aa).

Ser98 acts as the Nucleophile in catalysis. Residue His123 is part of the active site.

It belongs to the peptidase S14 family. In terms of assembly, fourteen ClpP subunits assemble into 2 heptameric rings which stack back to back to give a disk-like structure with a central cavity, resembling the structure of eukaryotic proteasomes.

Its subcellular location is the cytoplasm. The enzyme catalyses Hydrolysis of proteins to small peptides in the presence of ATP and magnesium. alpha-casein is the usual test substrate. In the absence of ATP, only oligopeptides shorter than five residues are hydrolyzed (such as succinyl-Leu-Tyr-|-NHMec, and Leu-Tyr-Leu-|-Tyr-Trp, in which cleavage of the -Tyr-|-Leu- and -Tyr-|-Trp bonds also occurs).. In terms of biological role, cleaves peptides in various proteins in a process that requires ATP hydrolysis. Has a chymotrypsin-like activity. Plays a major role in the degradation of misfolded proteins. The chain is ATP-dependent Clp protease proteolytic subunit from Desulforapulum autotrophicum (strain ATCC 43914 / DSM 3382 / VKM B-1955 / HRM2) (Desulfobacterium autotrophicum).